Here is a 351-residue protein sequence, read N- to C-terminus: Soluble TNF receptor II (351 aa).

The signal sequence occupies residues 1–19; sequence MKSVLYSYILFLSCIIING. TNFR-Cys repeat units lie at residues 31-67 and 69-110; these read KCKDNEYNRHNLCCLSCPPGTYASRLCDSKTNTNTQC and PCGS…NRIC. Cystine bridges form between Cys-32-Cys-43, Cys-44-Cys-57, Cys-47-Cys-67, Cys-70-Cys-85, Cys-88-Cys-102, and Cys-92-Cys-110. N-linked (GlcNAc...) asparagine; by host glycosylation is found at Asn-103, Asn-191, and Asn-250.

This sequence belongs to the orthopoxvirus OPG002 family.

It is found in the secreted. Inhibits host immune defense by binding to host TNF and various chemokines in the extracellular space. Binds host CC chemokines (beta chemokines) and CXC chemokines (alpha chemokines). This Bos taurus (Bovine) protein is Soluble TNF receptor II (OPG002).